Consider the following 219-residue polypeptide: Ribose-5-phosphate isomerase A (219 aa).

Residues S28–T31, D81–D84, and K94–G97 each bind substrate. The Proton acceptor role is filled by E103. Residue K121 participates in substrate binding.

The protein belongs to the ribose 5-phosphate isomerase family. In terms of assembly, homodimer.

The enzyme catalyses aldehydo-D-ribose 5-phosphate = D-ribulose 5-phosphate. Its pathway is carbohydrate degradation; pentose phosphate pathway; D-ribose 5-phosphate from D-ribulose 5-phosphate (non-oxidative stage): step 1/1. Catalyzes the reversible conversion of ribose-5-phosphate to ribulose 5-phosphate. This is Ribose-5-phosphate isomerase A from Haemophilus ducreyi (strain 35000HP / ATCC 700724).